The sequence spans 1375 residues: DNA-directed RNA polymerase subunit beta (1375 aa).

The protein belongs to the RNA polymerase beta chain family. The RNAP catalytic core consists of 2 alpha, 1 beta, 1 beta' and 1 omega subunit. When a sigma factor is associated with the core the holoenzyme is formed, which can initiate transcription.

The enzyme catalyses RNA(n) + a ribonucleoside 5'-triphosphate = RNA(n+1) + diphosphate. In terms of biological role, DNA-dependent RNA polymerase catalyzes the transcription of DNA into RNA using the four ribonucleoside triphosphates as substrates. The sequence is that of DNA-directed RNA polymerase subunit beta from Coxiella burnetii (strain Dugway 5J108-111).